The sequence spans 295 residues: Bifunctional protein FolD (295 aa).

NADP(+)-binding positions include 166–168, S195, and I236; that span reads GRS.

The protein belongs to the tetrahydrofolate dehydrogenase/cyclohydrolase family. Homodimer.

It carries out the reaction (6R)-5,10-methylene-5,6,7,8-tetrahydrofolate + NADP(+) = (6R)-5,10-methenyltetrahydrofolate + NADPH. The catalysed reaction is (6R)-5,10-methenyltetrahydrofolate + H2O = (6R)-10-formyltetrahydrofolate + H(+). It functions in the pathway one-carbon metabolism; tetrahydrofolate interconversion. In terms of biological role, catalyzes the oxidation of 5,10-methylenetetrahydrofolate to 5,10-methenyltetrahydrofolate and then the hydrolysis of 5,10-methenyltetrahydrofolate to 10-formyltetrahydrofolate. This Chlorobium luteolum (strain DSM 273 / BCRC 81028 / 2530) (Pelodictyon luteolum) protein is Bifunctional protein FolD.